Reading from the N-terminus, the 561-residue chain is uncharacterized protein (561 aa).

A signal peptide spans 1 to 24 (MELGAWRSILYIAFLFAITRHAFC). The Lumenal portion of the chain corresponds to 25–509 (KAVNLVHSPE…GYVYLSEIKQ (485 aa)). The helical transmembrane segment at 510 to 530 (YSSLILISLWISLILFVSFLN) threads the bilayer. Residues 531–561 (RRLILHYSFESVHQLKTLTRKFIYSSLLKQD) lie on the Cytoplasmic side of the membrane.

Its subcellular location is the endoplasmic reticulum membrane. The protein localises to the golgi apparatus membrane. This is an uncharacterized protein from Schizosaccharomyces pombe (strain 972 / ATCC 24843) (Fission yeast).